Here is a 208-residue protein sequence, read N- to C-terminus: V-type ATP synthase subunit E (208 aa).

It belongs to the V-ATPase E subunit family.

Its function is as follows. Produces ATP from ADP in the presence of a proton gradient across the membrane. This is V-type ATP synthase subunit E (atpE) from Chlamydia muridarum (strain MoPn / Nigg).